The primary structure comprises 171 residues: CDP-archaeol synthase (171 aa).

Helical transmembrane passes span 11–31 (VLYV…GLVF), 65–85 (VGLV…IGVI), 129–149 (LILV…IMLI), and 151–171 (LVLH…DVWY).

The protein belongs to the CDP-archaeol synthase family. The cofactor is Mg(2+).

Its subcellular location is the cell membrane. It catalyses the reaction 2,3-bis-O-(geranylgeranyl)-sn-glycerol 1-phosphate + CTP + H(+) = CDP-2,3-bis-O-(geranylgeranyl)-sn-glycerol + diphosphate. The protein operates within membrane lipid metabolism; glycerophospholipid metabolism. Its function is as follows. Catalyzes the formation of CDP-2,3-bis-(O-geranylgeranyl)-sn-glycerol (CDP-archaeol) from 2,3-bis-(O-geranylgeranyl)-sn-glycerol 1-phosphate (DGGGP) and CTP. This reaction is the third ether-bond-formation step in the biosynthesis of archaeal membrane lipids. The polypeptide is CDP-archaeol synthase (Methanothermobacter thermautotrophicus (strain ATCC 29096 / DSM 1053 / JCM 10044 / NBRC 100330 / Delta H) (Methanobacterium thermoautotrophicum)).